The following is a 121-amino-acid chain: Large ribosomal subunit protein uL24 (121 aa).

The protein belongs to the universal ribosomal protein uL24 family. In terms of assembly, part of the 50S ribosomal subunit.

Its function is as follows. One of two assembly initiator proteins, it binds directly to the 5'-end of the 23S rRNA, where it nucleates assembly of the 50S subunit. Located at the polypeptide exit tunnel on the outside of the subunit. This chain is Large ribosomal subunit protein uL24, found in Methanocorpusculum labreanum (strain ATCC 43576 / DSM 4855 / Z).